The chain runs to 317 residues: ATP synthase gamma chain (317 aa).

The protein belongs to the ATPase gamma chain family. F-type ATPases have 2 components, CF(1) - the catalytic core - and CF(0) - the membrane proton channel. CF(1) has five subunits: alpha(3), beta(3), gamma(1), delta(1), epsilon(1). CF(0) has three main subunits: a, b and c.

It is found in the cellular thylakoid membrane. Its function is as follows. Produces ATP from ADP in the presence of a proton gradient across the membrane. The gamma chain is believed to be important in regulating ATPase activity and the flow of protons through the CF(0) complex. The polypeptide is ATP synthase gamma chain (Acaryochloris marina (strain MBIC 11017)).